A 428-amino-acid polypeptide reads, in one-letter code: Serine--tRNA ligase (428 aa).

Position 231–233 (231–233 (TSE)) interacts with L-serine. Residues 262–264 (RRE) and Val-278 each bind ATP. Residue Glu-285 participates in L-serine binding. 349-352 (ELTS) is a binding site for ATP. Thr-384 serves as a coordination point for L-serine.

This sequence belongs to the class-II aminoacyl-tRNA synthetase family. Type-1 seryl-tRNA synthetase subfamily. In terms of assembly, homodimer. The tRNA molecule binds across the dimer.

The protein resides in the cytoplasm. The catalysed reaction is tRNA(Ser) + L-serine + ATP = L-seryl-tRNA(Ser) + AMP + diphosphate + H(+). The enzyme catalyses tRNA(Sec) + L-serine + ATP = L-seryl-tRNA(Sec) + AMP + diphosphate + H(+). Its pathway is aminoacyl-tRNA biosynthesis; selenocysteinyl-tRNA(Sec) biosynthesis; L-seryl-tRNA(Sec) from L-serine and tRNA(Sec): step 1/1. Catalyzes the attachment of serine to tRNA(Ser). Is also able to aminoacylate tRNA(Sec) with serine, to form the misacylated tRNA L-seryl-tRNA(Sec), which will be further converted into selenocysteinyl-tRNA(Sec). The protein is Serine--tRNA ligase of Bifidobacterium longum (strain NCC 2705).